A 473-amino-acid chain; its full sequence is Mitochondrial distribution and morphology protein 10 (473 aa).

This sequence belongs to the MDM10 family. As to quaternary structure, component of the ER-mitochondria encounter structure (ERMES) or MDM complex, composed of MMM1, MDM10, MDM12 and MDM34. Associates with the mitochondrial outer membrane sorting assembly machinery SAM(core) complex.

The protein resides in the mitochondrion outer membrane. Functionally, component of the ERMES/MDM complex, which serves as a molecular tether to connect the endoplasmic reticulum and mitochondria. Components of this complex are involved in the control of mitochondrial shape and protein biogenesis and may function in phospholipid exchange. MDM10 is involved in the late assembly steps of the general translocase of the mitochondrial outer membrane (TOM complex). Functions in the TOM40-specific route of the assembly of outer membrane beta-barrel proteins, including the association of TOM40 with the receptor TOM22 and small TOM proteins. Can associate with the SAM(core) complex as well as the MDM12-MMM1 complex, both involved in late steps of the major beta-barrel assembly pathway, that is responsible for biogenesis of all outer membrane beta-barrel proteins. May act as a switch that shuttles between both complexes and channels precursor proteins into the TOM40-specific pathway. Plays a role in mitochondrial morphology and in the inheritance of mitochondria. The polypeptide is Mitochondrial distribution and morphology protein 10 (Candida albicans (strain SC5314 / ATCC MYA-2876) (Yeast)).